We begin with the raw amino-acid sequence, 78 residues long: Large ribosomal subunit protein bL31 (78 aa).

It belongs to the bacterial ribosomal protein bL31 family. Type A subfamily. In terms of assembly, part of the 50S ribosomal subunit.

Binds the 23S rRNA. The protein is Large ribosomal subunit protein bL31 (rpmE) of Rickettsia conorii (strain ATCC VR-613 / Malish 7).